Reading from the N-terminus, the 299-residue chain is Ethylmalonyl-CoA decarboxylase (299 aa).

This sequence belongs to the enoyl-CoA hydratase/isomerase family.

It is found in the cytoplasm. It localises to the cytosol. The catalysed reaction is (2S)-ethylmalonyl-CoA + H(+) = butanoyl-CoA + CO2. It catalyses the reaction (S)-methylmalonyl-CoA + H(+) = propanoyl-CoA + CO2. It carries out the reaction (2R)-ethylmalonyl-CoA + H(+) = butanoyl-CoA + CO2. Functionally, decarboxylates ethylmalonyl-CoA, a potentially toxic metabolite, to form butyryl-CoA, suggesting it might be involved in metabolite proofreading. Acts preferentially on (S)-ethylmalonyl-CoA but also has some activity on the (R)-isomer. Also has methylmalonyl-CoA decarboxylase activity at lower level. This is Ethylmalonyl-CoA decarboxylase (echdc1) from Xenopus laevis (African clawed frog).